Reading from the N-terminus, the 218-residue chain is Octanoyltransferase (218 aa).

Residues 31 to 207 (AQTPDELWLL…QLAAQLGYAE (177 aa)) form the BPL/LPL catalytic domain. Substrate-binding positions include 70–77 (RGGQVTYH), 137–139 (SLG), and 150–152 (GLA). C168 functions as the Acyl-thioester intermediate in the catalytic mechanism.

Belongs to the LipB family.

The protein resides in the cytoplasm. The catalysed reaction is octanoyl-[ACP] + L-lysyl-[protein] = N(6)-octanoyl-L-lysyl-[protein] + holo-[ACP] + H(+). It functions in the pathway protein modification; protein lipoylation via endogenous pathway; protein N(6)-(lipoyl)lysine from octanoyl-[acyl-carrier-protein]: step 1/2. Functionally, catalyzes the transfer of endogenously produced octanoic acid from octanoyl-acyl-carrier-protein onto the lipoyl domains of lipoate-dependent enzymes. Lipoyl-ACP can also act as a substrate although octanoyl-ACP is likely to be the physiological substrate. This is Octanoyltransferase from Azotobacter vinelandii (strain DJ / ATCC BAA-1303).